Reading from the N-terminus, the 447-residue chain is Acidic leucine-rich nuclear phosphoprotein 32-related protein (447 aa).

LRR repeat units follow at residues 49–70 (NLQHLSVANIGVSSLEQFPRLG), 71–90 (NLQKLILSDNRITVGLEFLV), and 96–117 (SFCDLDLSNNRIQFVEDLAPLA). Residues 129 to 167 (CPVTRLKDYRSRVFGLIKTLKYLDKTDAEGNERPESDDE) form the LRRCT domain. The disordered stretch occupies residues 155-447 (DAEGNERPES…EDDDDDDEER (293 aa)). Composition is skewed to acidic residues over residues 163-194 (ESDDEDDEEDEEDEEEEEEGDEEDPGSGEIDG) and 215-231 (VDVDEDEESDAEDDESE). A compositionally biased stretch (polar residues) spans 232–242 (QATGVNGTSYR). 5 stretches are compositionally biased toward acidic residues: residues 256-277 (VREDDGDDSESGEEEVGEDNDV), 284-309 (EDSENEEDGVDDEEDDEEDEEEEEVD), 336-374 (GDDDEDGDGETGEDDQGVEDDGEFADEDDDVEEEDEESG), 397-415 (PINEDNDPDEEEEVEDDLP), and 433-447 (DDDDGEDDDDDDEER).

This sequence belongs to the ANP32 family.

This is Acidic leucine-rich nuclear phosphoprotein 32-related protein from Arabidopsis thaliana (Mouse-ear cress).